The chain runs to 92 residues: Acylphosphatase (92 aa).

In terms of domain architecture, Acylphosphatase-like spans 6-92 (RAHVYVSGRV…EGVDGFEIRR (87 aa)). Catalysis depends on residues Arg-21 and Asn-39.

It belongs to the acylphosphatase family.

It catalyses the reaction an acyl phosphate + H2O = a carboxylate + phosphate + H(+). The polypeptide is Acylphosphatase (acyP) (Natronomonas pharaonis (strain ATCC 35678 / DSM 2160 / CIP 103997 / JCM 8858 / NBRC 14720 / NCIMB 2260 / Gabara) (Halobacterium pharaonis)).